A 185-amino-acid chain; its full sequence is Elongation factor P (185 aa).

The protein belongs to the elongation factor P family.

It is found in the cytoplasm. It functions in the pathway protein biosynthesis; polypeptide chain elongation. Involved in peptide bond synthesis. Stimulates efficient translation and peptide-bond synthesis on native or reconstituted 70S ribosomes in vitro. Probably functions indirectly by altering the affinity of the ribosome for aminoacyl-tRNA, thus increasing their reactivity as acceptors for peptidyl transferase. The protein is Elongation factor P of Bordetella bronchiseptica (strain ATCC BAA-588 / NCTC 13252 / RB50) (Alcaligenes bronchisepticus).